The sequence spans 305 residues: Heme A synthase (305 aa).

The Cytoplasmic portion of the chain corresponds to 1 to 6; that stretch reads MKKFLK. A helical membrane pass occupies residues 7-27; it reads VWSVLTIICMTVVVFGGALVT. Over 28-63 the chain is Extracellular; that stretch reads KTGSADGCGNSWPLCNGQLVRLTDVTPEKLIEFMHR. Residues Cys-35 and Cys-42 are joined by a disulfide bond. Glu-59 is an active-site residue. His-62 lines the heme o pocket. A helical transmembrane segment spans residues 64-84; the sequence is MTTGISSIFVIVLAICAWIYM. Over 85–92 the chain is Cytoplasmic; it reads KNRRETKP. The chain crosses the membrane as a helical span at residues 93–113; sequence LAIIAVLFLIIQALMGMAAVV. Over 114–122 the chain is Extracellular; it reads WGQNPYIMA. The helical transmembrane segment at 123–143 threads the bilayer; that stretch reads LHFGISIICYASIVLLALMIF. His-124 serves as a coordination point for heme o. Over 144 to 160 the chain is Cytoplasmic; that stretch reads EVDRKFDARNLVMGTKL. Residues 161 to 181 form a helical membrane-spanning segment; that stretch reads RVNIYALTIYTYLAVYTGALV. The Extracellular segment spans residues 182–212; it reads RHEKASMAVPVWPFENGHFIMPTSVQDYVQY. The chain crosses the membrane as a helical span at residues 213-233; the sequence is FHRLAAFILIVWLLYVTWLVF. His-214 serves as a coordination point for heme b. Over 234–240 the chain is Cytoplasmic; the sequence is RDYRRYR. Residues 241 to 261 form a helical membrane-spanning segment; it reads VLTFSMVLSLVFIALQAVTGA. Residues 262–271 lie on the Extracellular side of the membrane; sequence LSVYTGVNLY. Residues 272-292 traverse the membrane as a helical segment; it reads IALAHSLIITMLFALLCYLCL. Residue His-276 coordinates heme b. The Cytoplasmic portion of the chain corresponds to 293–305; that stretch reads LASRSKSNRLRIK.

It belongs to the COX15/CtaA family. Type 1 subfamily. In terms of assembly, interacts with CtaB. Heme b is required as a cofactor.

The protein localises to the cell membrane. It carries out the reaction Fe(II)-heme o + 2 A + H2O = Fe(II)-heme a + 2 AH2. It functions in the pathway porphyrin-containing compound metabolism; heme A biosynthesis; heme A from heme O: step 1/1. Catalyzes the conversion of heme O to heme A by two successive hydroxylations of the methyl group at C8. The first hydroxylation forms heme I, the second hydroxylation results in an unstable dihydroxymethyl group, which spontaneously dehydrates, resulting in the formyl group of heme A. In Listeria monocytogenes serovar 1/2a (strain ATCC BAA-679 / EGD-e), this protein is Heme A synthase.